A 286-amino-acid polypeptide reads, in one-letter code: Thymidylate synthase (286 aa).

140–141 (RR) contributes to the dUMP binding site. Residue Cys-161 is the Nucleophile of the active site. DUMP-binding positions include 185-188 (RSND), Asn-196, and 226-228 (HIY). (6R)-5,10-methylene-5,6,7,8-tetrahydrofolate is bound at residue Asp-188. (6R)-5,10-methylene-5,6,7,8-tetrahydrofolate is bound at residue Ala-285.

This sequence belongs to the thymidylate synthase family. Bacterial-type ThyA subfamily. Homodimer.

The protein resides in the cytoplasm. It catalyses the reaction dUMP + (6R)-5,10-methylene-5,6,7,8-tetrahydrofolate = 7,8-dihydrofolate + dTMP. Its pathway is pyrimidine metabolism; dTTP biosynthesis. Catalyzes the reductive methylation of 2'-deoxyuridine-5'-monophosphate (dUMP) to 2'-deoxythymidine-5'-monophosphate (dTMP) while utilizing 5,10-methylenetetrahydrofolate (mTHF) as the methyl donor and reductant in the reaction, yielding dihydrofolate (DHF) as a by-product. This enzymatic reaction provides an intracellular de novo source of dTMP, an essential precursor for DNA biosynthesis. This is Thymidylate synthase from Streptococcus thermophilus (strain ATCC BAA-250 / LMG 18311).